The sequence spans 70 residues: Translational regulator CsrA (70 aa).

The protein belongs to the CsrA/RsmA family. In terms of assembly, homodimer; the beta-strands of each monomer intercalate to form a hydrophobic core, while the alpha-helices form wings that extend away from the core.

It localises to the cytoplasm. Its function is as follows. A translational regulator that binds mRNA to regulate translation initiation and/or mRNA stability. Usually binds in the 5'-UTR at or near the Shine-Dalgarno sequence preventing ribosome-binding, thus repressing translation. Its main target seems to be the major flagellin gene, while its function is anatagonized by FliW. In Clostridioides difficile (strain 630) (Peptoclostridium difficile), this protein is Translational regulator CsrA.